The following is a 109-amino-acid chain: Nucleoid-associated protein BCE_0021 (109 aa).

The protein belongs to the YbaB/EbfC family. As to quaternary structure, homodimer.

The protein resides in the cytoplasm. It is found in the nucleoid. In terms of biological role, binds to DNA and alters its conformation. May be involved in regulation of gene expression, nucleoid organization and DNA protection. This Bacillus cereus (strain ATCC 10987 / NRS 248) protein is Nucleoid-associated protein BCE_0021.